The following is a 397-amino-acid chain: Lysophospholipid transporter LplT (397 aa).

Topologically, residues Met1–Lys17 are periplasmic. Residues Ala18 to Leu38 form a helical membrane-spanning segment. At Ala39 to Pro52 the chain is on the cytoplasmic side. The helical transmembrane segment at Ile53–Ala73 threads the bilayer. Residues Asp74–Leu90 are Periplasmic-facing. A helical membrane pass occupies residues Leu91–Val111. Topologically, residues Gly112–Thr144 are cytoplasmic. A helical membrane pass occupies residues Ile145–Val165. A topological domain (periplasmic) is located at residue Ala166. The helical transmembrane segment at Leu167–Leu187 threads the bilayer. Over Ala188 to Ser226 the chain is Cytoplasmic. A helical transmembrane segment spans residues Leu227–Leu247. The Periplasmic segment spans residues Gly248–Thr256. The chain crosses the membrane as a helical span at residues Tyr257–Val277. Residues Thr278–Glu280 lie on the Cytoplasmic side of the membrane. The helical transmembrane segment at Thr281–Leu301 threads the bilayer. Topologically, residues Gln302–Glu304 are periplasmic. The helical transmembrane segment at Leu305–Pro325 threads the bilayer. At Leu326–Ala343 the chain is on the cytoplasmic side. A helical membrane pass occupies residues Ile344–Leu364. Over Ala365–Val366 the chain is Periplasmic. A helical membrane pass occupies residues Met367 to Ile387. Topologically, residues Thr388–His397 are cytoplasmic.

Belongs to the major facilitator superfamily. LplT (TC 2.A.1.42) family.

It localises to the cell inner membrane. Its function is as follows. Catalyzes the facilitated diffusion of 2-acyl-glycero-3-phosphoethanolamine (2-acyl-GPE) into the cell. This Escherichia coli (strain SMS-3-5 / SECEC) protein is Lysophospholipid transporter LplT.